An 888-amino-acid polypeptide reads, in one-letter code: Serine/threonine-protein phosphatase 1 regulatory subunit 10 (888 aa).

The tract at residues 1 to 348 (MGSGPIDPKE…EPAPPAEPMD (348 aa)) is interaction with TOX4. Positions 73–147 (KLLNNWLTYS…SDWMAVIRSQ (75 aa)) constitute a TFIIS N-terminal domain. 4 disordered regions span residues 147–213 (QSST…STGL), 247–270 (SATA…NTAP), 306–400 (KKKK…KTVT), and 534–853 (VETL…HGGD). 2 stretches are compositionally biased toward basic and acidic residues: residues 153–166 (AEKD…EGKS) and 174–196 (PLTE…EKPK). Lys179 participates in a covalent cross-link: Glycyl lysine isopeptide (Lys-Gly) (interchain with G-Cter in SUMO2). Positions 248-258 (ATAAPGDAAPP) are enriched in low complexity. Lys262 participates in a covalent cross-link: Glycyl lysine isopeptide (Lys-Gly) (interchain with G-Cter in SUMO2). Ser313 carries the post-translational modification Phosphoserine. A compositionally biased stretch (polar residues) spans 325 to 334 (KTSTEQSTAK). Residue Ser382 is modified to Phosphoserine. Residues 388–417 (QLTRKGRKRKTVTWPEEGKLREYFYFELDE) are necessary for interaction with PPP1CA. Positions 393–408 (GRKRKTVTWPEEGKLR) are necessary for interaction with PPP1CC. The PP1-binding motif signature appears at 394–423 (RKRKTVTWPEEGKLREYFYFELDETERVNV). Residue Thr398 is modified to Phosphothreonine. The segment at 418 to 619 (TERVNVNKIK…LKQMLVPHGL (202 aa)) is interaction with WDR82. Over residues 540–551 (GGSGGSPDGAGG) the composition is skewed to gly residues. Phosphoserine occurs at positions 545 and 591. Residues 583–595 (EILTSIMGSPNSH) show a composition bias toward polar residues. The span at 596–611 (PSEELLKQPDYSDKLK) shows a compositional bias: basic and acidic residues. Residues 644–655 (PPGPGGPMPGPH) show a composition bias toward pro residues. Arg665 carries the omega-N-methylarginine modification. The span at 674 to 690 (RGGDPFWDGPGDPMRGG) shows a compositional bias: low complexity. Omega-N-methylarginine occurs at positions 693 and 737. Composition is skewed to gly residues over residues 724-762 (ARGG…GSMG) and 784-794 (GPGGNMGGSGG). Residues 811 to 851 (PHDVPSHRGHDHRGPPPHEHRGHDGHGGGGHRGHDGGHSHG) show a composition bias toward basic and acidic residues. A C3H1-type zinc finger spans residues 854–882 (MSNRPVCRHFMMKGNCRYENNCAFYHPGV).

In terms of assembly, component of the PNUTS-PP1 complex (also named PTW/PP1 complex), composed of PPP1R10/PNUTS, TOX4, WDR82, and PPP1CA (or PPP1CB or PPP1CC). In terms of processing, phosphorylated on Ser-398 by PKA within the region necessary for interaction with PPP1CA.

The protein resides in the nucleus. Its subcellular location is the chromosome. Its function is as follows. Substrate-recognition component of the PNUTS-PP1 protein phosphatase complex, a protein phosphatase 1 (PP1) complex that promotes RNA polymerase II transcription pause-release, allowing transcription elongation. Promoter-proximal pausing by RNA polymerase II is a transcription halt following transcription initiation but prior to elongation, which acts as a checkpoint to control that transcripts are favorably configured for transcriptional elongation. The PNUTS-PP1 complex mediates the release of RNA polymerase II from promoter-proximal region of genes by catalyzing dephosphorylation of proteins involved in transcription, such as AFF4, CDK9, MEPCE, INTS12, NCBP1, POLR2M/GDOWN1 and SUPT6H. The PNUTS-PP1 complex also regulates RNA polymerase II transcription termination by mediating dephosphorylation of SUPT5H in termination zones downstream of poly(A) sites, thereby promoting deceleration of RNA polymerase II transcription. PNUTS-PP1 complex is also involved in the response to replication stress by mediating dephosphorylation of POLR2A at 'Ser-5' of the CTD, promoting RNA polymerase II degradation. The PNUTS-PP1 complex also plays a role in the control of chromatin structure and cell cycle progression during the transition from mitosis into interphase. PNUTS-PP1 complex mediates dephosphorylation of MYC, promoting MYC stability by preventing MYC ubiquitination by the SCF(FBXW7) complex. In addition to acts as a substrate-recognition component, PPP1R10/PNUTS also acts as a nuclear targeting subunit for the PNUTS-PP1 complex. In some context, PPP1R10/PNUTS also acts as an inhibitor of protein phosphatase 1 (PP1) activity by preventing access to substrates, such as RB. This Mus musculus (Mouse) protein is Serine/threonine-protein phosphatase 1 regulatory subunit 10.